A 671-amino-acid chain; its full sequence is Probable serine/threonine-protein kinase DDB_G0286627 (671 aa).

Positions 31-283 (WVIERQLSKG…SHQLIKHPFF (253 aa)) constitute a Protein kinase domain. ATP is bound by residues 37-45 (LSKGSFGQV) and K61. D148 serves as the catalytic Proton acceptor. Residues 369–389 (FKIIYLFLILLFLMTILVNLN) traverse the membrane as a helical segment. Positions 410 to 523 (PESNPIKKPS…PPVTETPKPT (114 aa)) are disordered. Residues 427 to 490 (NQYSEGSQSS…PTDSSTTDPP (64 aa)) show a composition bias toward low complexity. Residues 491 to 513 (VTDPPITDPPITDPPVTDPPITE) show a composition bias toward pro residues.

It belongs to the protein kinase superfamily. STE Ser/Thr protein kinase family. Requires Mg(2+) as cofactor.

It localises to the membrane. It carries out the reaction L-seryl-[protein] + ATP = O-phospho-L-seryl-[protein] + ADP + H(+). The catalysed reaction is L-threonyl-[protein] + ATP = O-phospho-L-threonyl-[protein] + ADP + H(+). In Dictyostelium discoideum (Social amoeba), this protein is Probable serine/threonine-protein kinase DDB_G0286627.